Here is a 37-residue protein sequence, read N- to C-terminus: MVEALLSGIVLGLIPITLLGLFVTAYLQYRRGDQLDL.

A helical transmembrane segment spans residues L5–A25.

The protein belongs to the PetG family. In terms of assembly, the 4 large subunits of the cytochrome b6-f complex are cytochrome b6, subunit IV (17 kDa polypeptide, PetD), cytochrome f and the Rieske protein, while the 4 small subunits are PetG, PetL, PetM and PetN. The complex functions as a dimer.

The protein resides in the plastid. The protein localises to the chloroplast thylakoid membrane. Component of the cytochrome b6-f complex, which mediates electron transfer between photosystem II (PSII) and photosystem I (PSI), cyclic electron flow around PSI, and state transitions. PetG is required for either the stability or assembly of the cytochrome b6-f complex. This Marchantia polymorpha (Common liverwort) protein is Cytochrome b6-f complex subunit 5.